We begin with the raw amino-acid sequence, 103 residues long: Large ribosomal subunit protein bL21 (103 aa).

Belongs to the bacterial ribosomal protein bL21 family. In terms of assembly, part of the 50S ribosomal subunit. Contacts protein L20.

This protein binds to 23S rRNA in the presence of protein L20. In Chloroflexus aggregans (strain MD-66 / DSM 9485), this protein is Large ribosomal subunit protein bL21.